The following is a 485-amino-acid chain: Glutamate--tRNA ligase (485 aa).

The short motif at 12–22 (PSPTGYMHIGN) is the 'HIGH' region element. Residues 253-257 (KLSKR) carry the 'KMSKS' region motif. An ATP-binding site is contributed by lysine 256.

It belongs to the class-I aminoacyl-tRNA synthetase family. Glutamate--tRNA ligase type 1 subfamily. Monomer.

Its subcellular location is the cytoplasm. It carries out the reaction tRNA(Glu) + L-glutamate + ATP = L-glutamyl-tRNA(Glu) + AMP + diphosphate. Catalyzes the attachment of glutamate to tRNA(Glu) in a two-step reaction: glutamate is first activated by ATP to form Glu-AMP and then transferred to the acceptor end of tRNA(Glu). This Clostridium acetobutylicum (strain ATCC 824 / DSM 792 / JCM 1419 / IAM 19013 / LMG 5710 / NBRC 13948 / NRRL B-527 / VKM B-1787 / 2291 / W) protein is Glutamate--tRNA ligase.